A 251-amino-acid polypeptide reads, in one-letter code: SRR1-like protein (251 aa).

The protein belongs to the SRR1 family.

The protein localises to the cytoplasm. The protein resides in the nucleus. In Schizosaccharomyces pombe (strain 972 / ATCC 24843) (Fission yeast), this protein is SRR1-like protein.